The primary structure comprises 341 residues: 2-keto-4-carboxy-3-hexenedioate hydratase (341 aa).

Residues His8 and His10 each contribute to the Zn(2+) site. Residue 71 to 73 (RAS) coordinates substrate. His178 is a binding site for Zn(2+). Substrate is bound by residues Tyr194 and His223. The Proton donor/acceptor role is filled by Glu284. Arg290 provides a ligand contact to substrate.

It belongs to the metallo-dependent hydrolases superfamily. Homodimer. Requires Zn(2+) as cofactor.

It carries out the reaction (3Z)-2-oxo-4-carboxy-3-hexenedioate + H2O = (2S)-2-hydroxy-4-oxobutane-1,2,4-tricarboxylate. It participates in secondary metabolite metabolism; lignin degradation. In terms of biological role, contributes to the degradation of lignin at the level of the protocatechuate 4,5-cleavage pathway. Catalyzes the hydration of the double bond of (3Z)-2-keto-4-carboxy-3-hexenedioate (KCH) to (4S)-4-carboxy-4-hydroxy-2-oxoadipate (CHA, also named (2S)-2-hydroxy-4-oxobutane-1,2,4-tricarboxylate). Is involved in the catabolism of both vanillate and syringate. This chain is 2-keto-4-carboxy-3-hexenedioate hydratase, found in Sphingobium sp. (strain NBRC 103272 / SYK-6).